The following is a 113-amino-acid chain: Large ribosomal subunit protein bL19 (113 aa).

This sequence belongs to the bacterial ribosomal protein bL19 family.

In terms of biological role, this protein is located at the 30S-50S ribosomal subunit interface and may play a role in the structure and function of the aminoacyl-tRNA binding site. The chain is Large ribosomal subunit protein bL19 from Corynebacterium glutamicum (strain R).